The sequence spans 234 residues: Glycerol-3-phosphate acyltransferase (234 aa).

The next 6 membrane-spanning stretches (helical) occupy residues 4-24 (LLAILVVSYIVGSIPTSLIAG), 56-76 (TVTLIDIIKGVVAAVSVVAFF), 90-110 (VALRLLAGMSAVIGHVFTVFA), 122-142 (AGMLIGIAPVSMLMVIGVFLL), 152-172 (VASILAAIAFPLIIAIRKYLF), and 191-211 (FHDSLDYHLIIFGLIVAIAII).

This sequence belongs to the PlsY family. As to quaternary structure, probably interacts with PlsX.

It localises to the cell inner membrane. The enzyme catalyses an acyl phosphate + sn-glycerol 3-phosphate = a 1-acyl-sn-glycero-3-phosphate + phosphate. It participates in lipid metabolism; phospholipid metabolism. Its function is as follows. Catalyzes the transfer of an acyl group from acyl-phosphate (acyl-PO(4)) to glycerol-3-phosphate (G3P) to form lysophosphatidic acid (LPA). This enzyme utilizes acyl-phosphate as fatty acyl donor, but not acyl-CoA or acyl-ACP. This chain is Glycerol-3-phosphate acyltransferase, found in Chlorobium chlorochromatii (strain CaD3).